We begin with the raw amino-acid sequence, 241 residues long: Histidine-rich protein PFHRP-III (241 aa).

The signal sequence occupies residues 1–21 (MVSFSKNKVLSAAVFASVLLL). Residues 52–76 (AHAGDAHHAHHVADAHHAHHVADAH) show a composition bias toward basic and acidic residues. Disordered regions lie at residues 52–145 (AHAG…ANAH) and 195–241 (AHHD…HLHH). Low complexity predominate over residues 84–145 (AHHAANAHHA…ANAHHAANAH (62 aa)). Positions 195-231 (AHHDGAHHDDAHHDGAHHDDAHHDGAHHDGAHHDGAH) are enriched in basic and acidic residues.

The chain is Histidine-rich protein PFHRP-III from Plasmodium falciparum.